Consider the following 152-residue polypeptide: uncharacterized protein (152 aa).

The N-terminal stretch at 1–16 (MRKLLISLALAIPVFA) is a signal peptide. The region spanning 20–135 (NLLQKGYEVY…AVAYWLYHNY (116 aa)) is the Cytochrome c domain. Heme c is bound by residues cysteine 33, cysteine 36, and histidine 37.

This is an uncharacterized protein from Aquifex aeolicus (strain VF5).